A 533-amino-acid chain; its full sequence is Retinoid isomerohydrolase (533 aa).

Position 2 is an N-acetylserine (Ser-2). Phosphothreonine is present on residues Thr-101 and Thr-105. Cys-112 is lipidated: S-palmitoyl cysteine; in membrane form. Lys-113 carries the post-translational modification N6-acetyllysine. Position 117 is a phosphoserine (Ser-117). His-180 provides a ligand contact to Fe cation. A lipid anchor (S-palmitoyl cysteine; in membrane form) is attached at Cys-231. Residues His-241 and His-313 each coordinate Fe cation. 2 S-palmitoyl cysteine; in membrane form lipidation sites follow: Cys-329 and Cys-330. A Fe cation-binding site is contributed by His-527.

This sequence belongs to the carotenoid oxygenase family. As to quaternary structure, interacts with MYO7A; this mediates light-dependent intracellular transport of RPE65. The cofactor is Fe(2+). In terms of processing, palmitoylation by LRAT regulates ligand binding specificity; the palmitoylated form (membrane form) specifically binds all-trans-retinyl-palmitate, while the soluble unpalmitoylated form binds all-trans-retinol (vitamin A). Retinal pigment epithelium specific.

It is found in the cytoplasm. The protein resides in the cell membrane. It localises to the microsome membrane. The catalysed reaction is an all-trans-retinyl ester + H2O = 11-cis-retinol + a fatty acid + H(+). It carries out the reaction lutein = (3R,3'S)-zeaxanthin. It catalyses the reaction all-trans-retinyl hexadecanoate + H2O = 11-cis-retinol + hexadecanoate + H(+). Functionally, critical isomerohydrolase in the retinoid cycle involved in regeneration of 11-cis-retinal, the chromophore of rod and cone opsins. Catalyzes the cleavage and isomerization of all-trans-retinyl fatty acid esters to 11-cis-retinol which is further oxidized by 11-cis retinol dehydrogenase to 11-cis-retinal for use as visual chromophore. Essential for the production of 11-cis retinal for both rod and cone photoreceptors. Also capable of catalyzing the isomerization of lutein to meso-zeaxanthin an eye-specific carotenoid. The soluble form binds vitamin A (all-trans-retinol), making it available for LRAT processing to all-trans-retinyl ester. The membrane form, palmitoylated by LRAT, binds all-trans-retinyl esters, making them available for IMH (isomerohydrolase) processing to all-cis-retinol. The soluble form is regenerated by transferring its palmitoyl groups onto 11-cis-retinol, a reaction catalyzed by LRAT. The polypeptide is Retinoid isomerohydrolase (RPE65) (Canis lupus familiaris (Dog)).